A 236-amino-acid chain; its full sequence is Small ribosomal subunit protein uS3 (236 aa).

A KH type-2 domain is found at 39 to 107 (VREFLKKKLA…PVHLNIEEVR (69 aa)). Positions 215 to 236 (AAQPAEPEKKVRKSGAKNAATS) are disordered.

This sequence belongs to the universal ribosomal protein uS3 family. Part of the 30S ribosomal subunit. Forms a tight complex with proteins S10 and S14.

Binds the lower part of the 30S subunit head. Binds mRNA in the 70S ribosome, positioning it for translation. The chain is Small ribosomal subunit protein uS3 from Methylobacillus flagellatus (strain ATCC 51484 / DSM 6875 / VKM B-1610 / KT).